Reading from the N-terminus, the 442-residue chain is MLNARDVCPEGNDDQQLDHNFKQMEEHLALMVEGNENEDPRKATCEYEDTNEDGATCTSGVLSEIQENFGRLRLCDVTAPLLEFHGLDCLQQIQKRSRHFAFDGSPAKKSRSGGVLVTGPKQKQLQKENVWNRKSKGSASADNIEKLPITIEKLHMIGLHGDCLEHNAVLRLMNLFRSLHDHLTADLGFSRQNSMPSDYLFDMPVKSTMPKSLNVRYQLQVLCTKVERFLVQQRRTLEANRHFDFEKYDECDKLLKGFASYLDNFKLLLKPKMRNRNGNSGSNADKFHTQRMERLLIGLRDWIKAAHLSVHVFNWEMDLEHRYSGAMTESHKSLNERAILLSGAELRAAEARGISAEDLFIAQRYKLGGPIYCVLEQHEFLSALIANPETYFPPSVVAICGPQKLGAVSMEQPSASEEEFEETEEVPSSPPRHTGRVPRFRS.

The required for interaction with ubiquitin stretch occupies residues 201–250 (FDMPVKSTMPKSLNVRYQLQVLCTKVERFLVQQRRTLEANRHFDFEKYDE). Residues 408–442 (VSMEQPSASEEEFEETEEVPSSPPRHTGRVPRFRS) form a disordered region. Residues 416 to 425 (SEEEFEETEE) are compositionally biased toward acidic residues. The segment covering 433–442 (HTGRVPRFRS) has biased composition (basic residues).

Interacts (via central region) with ubiquitin. Interacts (via C-terminus) with otu (via OTU domain); the interaction enhances otu aggregation into amyloid-like structures and enhances its deubiquitinase activity. Together with otu interacts with CycA/cyclin-A (via C-terminus); the interaction stabilizes CycA by promoting and enhancing otu dependent deubiquitination of CycA. Together with otu interacts with Traf6. Part of a complex composed of at least tut, bam and bgcn; complex formation does not require RNA. Interacts (via C-terminus) with bgcn; the interaction is direct and is not disrupted by eIF4A. Interacts with eIF4A (via multiple contacts); the interaction is direct and is not disrupted by bgcn. Interacts (via N-terminus) with tut; the interaction is direct and mediates the interaction between tut and bgcn. As part of the bam-bgcn-tut complex associates with twin; may recruit the CCR4-NOT1 deadenylation complex to mRNA 3'-UTRs to mediate post-transcriptional regulation of expression. Part of a complex composed of at least mei-P26, bam, bgcn and Sxl; this complex is involved in translational repression of nanos mRNA. Ubiquitinated (C-terminal region). In terms of tissue distribution, in cystoblasts and/or very early cystocytes in testis (at protein level); expression levels are regulated by mei-P26. In cystoblasts and/or very early cystocytes in ovary. Expressed in the gut; expression levels increase with age.

The protein localises to the cytoplasm. Regulatory component of a deubiquitinase complex consisting of bam and otu. The complex deubiquitinates K63-linked polyubiquitinated proteins, antagonizing the ubiquitination activity of Traf6 and regulating the IMD immune signaling pathway. Otu-bam deubiquitinase activity is regulated by Traf6 dependent immune signaling regulation of bam expression levels; this forms a feedback loop that regulates the IMD immune signaling pathway and balances gut immune activity during aging. The complex deubiquitinates and stabilizes CycA/cyclin-A to regulate CycA-dependent differentiation. Required to initiate both male and female gametogenesis. Part of a complex with bgcn involved in 3'-UTR-dependent translational repression of a subset of mRNAs, including those for mei-P26, nanos and shg/E-cadherin. Repression of mei-P26 is targeted by let-7 miRNA. Involved in a regulatory cascade with mei-P26 to control the progression of cystocytes through transit amplification and the switch to spermatocyte differentiation; mei-P26 facilitates bam accumulation, which in turn represses translation of mei-P26. Forms a complex with tut and bgcn involved in 3'-UTR-dependent post-transcriptional repression of several 3'-RNA processing factors, which promotes germline stem cell lineage differentiation and mitosis-to-meiosis transition. In Drosophila melanogaster (Fruit fly), this protein is Protein bag of marbles.